A 252-amino-acid polypeptide reads, in one-letter code: 5-oxoprolinase subunit A (252 aa).

The protein belongs to the LamB/PxpA family. As to quaternary structure, forms a complex composed of PxpA, PxpB and PxpC.

It catalyses the reaction 5-oxo-L-proline + ATP + 2 H2O = L-glutamate + ADP + phosphate + H(+). Functionally, catalyzes the cleavage of 5-oxoproline to form L-glutamate coupled to the hydrolysis of ATP to ADP and inorganic phosphate. This chain is 5-oxoprolinase subunit A, found in Mycobacterium avium (strain 104).